Reading from the N-terminus, the 459-residue chain is MSAISSRNQKMEQQRQLMEAYIRQKRASPGMVQASDLQISRPMSGMRSNSRELHAYDGPMQFISSPHNPDQILTNGSPVGGTVAMNSTRNHSNNMRTLSTISQEADLIEEISSHELEDEESSPVTVIEQQQTAPHSANSTHSQRPSTTRQPSFNDTLDEDDYTNRNIAGAAPVRPVGLASSPYKEAGLDGSSMETSNGAGGESEGDVIGNIDQFVMQPAPQGVLYKCRITRDRKGMDRGLFPIYYLHLERDYGKKIFLLGGRKRKKSKTSNYIVSCDPTDLSRSADGFCGKLRSNVFGTSFTVFDSGNKDSTDSPRLDLAVIIYDTNILGFKGPRNMTVILPGMTEDDQRVKISSADPKQTGILDLYKMKNMDNIVELHNKTPVWNDETQSYVLNFHGRVTQASVKNFQLVHDSDPEYIVMQFGRTSEDVFTMDYRYPLCAMQAFAIALSSFDGKIACE.

Residues 114-205 (HELEDEESSP…SNGAGGESEG (92 aa)) form a disordered region. Over residues 123–155 (PVTVIEQQQTAPHSANSTHSQRPSTTRQPSFND) the composition is skewed to polar residues. Ser152 is modified (phosphoserine).

It belongs to the TUB family.

It is found in the cytoplasm. Its subcellular location is the nucleus. The protein resides in the cell projection. It localises to the cilium membrane. The protein localises to the rhabdomere. In Drosophila persimilis (Fruit fly), this protein is Protein king tubby.